An 85-amino-acid polypeptide reads, in one-letter code: NAD(P)H-quinone oxidoreductase subunit O (85 aa).

The protein belongs to the complex I NdhO subunit family. In terms of assembly, NDH-1 can be composed of about 15 different subunits; different subcomplexes with different compositions have been identified which probably have different functions.

It localises to the cellular thylakoid membrane. The enzyme catalyses a plastoquinone + NADH + (n+1) H(+)(in) = a plastoquinol + NAD(+) + n H(+)(out). The catalysed reaction is a plastoquinone + NADPH + (n+1) H(+)(in) = a plastoquinol + NADP(+) + n H(+)(out). Functionally, NDH-1 shuttles electrons from an unknown electron donor, via FMN and iron-sulfur (Fe-S) centers, to quinones in the respiratory and/or the photosynthetic chain. The immediate electron acceptor for the enzyme in this species is believed to be plastoquinone. Couples the redox reaction to proton translocation, and thus conserves the redox energy in a proton gradient. Cyanobacterial NDH-1 also plays a role in inorganic carbon-concentration. In Synechococcus sp. (strain WH7803), this protein is NAD(P)H-quinone oxidoreductase subunit O.